Reading from the N-terminus, the 477-residue chain is Otolin-1 (477 aa).

The first 23 residues, 1 to 23 (MWMFSWLCAILIILAIAGMNTIA), serve as a signal peptide directing secretion. 2 disordered regions span residues 28–55 (HTKFTKKSEEREMPKGLKPSSGPPPEEE) and 111–337 (QKGE…KGEL). A compositionally biased stretch (basic and acidic residues) spans 33-42 (KKSEEREMPK). In terms of domain architecture, Collagen-like 1 spans 116-175 (GETGQPGPKGEAGNLGIPGPPGVVGPQGPRGYKGEKGLKGERGDQGVPGYPGKPGAQGEP). Hydroxyproline is present on residues proline 133 and proline 136. The segment covering 147–159 (YKGEKGLKGERGD) has biased composition (basic and acidic residues). Hydroxyproline occurs at positions 163, 166, and 169. Lysine 178 carries the post-translational modification 5-hydroxylysine. An O-linked (Gal...) hydroxylysine glycan is attached at lysine 178. The segment covering 182-191 (GNIGLGGVKG) has biased composition (gly residues). N-linked (GlcNAc...) asparagine glycosylation is present at asparagine 202. Collagen-like domains follow at residues 209 to 268 (GDQG…KGSK) and 278 to 337 (GRNG…KGEL). Proline 223 is subject to Hydroxyproline. Composition is skewed to basic and acidic residues over residues 226–240 (KGEKGEMGEKGEMGD) and 247–277 (SGERGGKGQKGEGGMKGEKGSKGDSGMEGKS). 2 positions are modified to hydroxyproline: proline 283 and proline 301. Over residues 298-310 (LGPPGLLGPTGPK) the composition is skewed to low complexity. Lysine 310 is modified (5-hydroxylysine). O-linked (Gal...) hydroxylysine glycosylation is present at lysine 310. The 136-residue stretch at 338 to 473 (ARVPRSAFSA…GFLLYPEETS (136 aa)) folds into the C1q domain. A glycan (N-linked (GlcNAc...) asparagine) is linked at asparagine 381.

It belongs to the OTOL1 family. As to quaternary structure, homooligomer; disulfide-linked; probably forms homotrimers. Interacts with OC90. Interacts with CBLN1.

The protein resides in the secreted. It localises to the extracellular space. The protein localises to the extracellular matrix. Functionally, collagen-like protein specifically expressed in the inner ear, which provides an organic scaffold for otoconia, a calcium carbonate structure in the saccule and utricle of the ear. Acts as a scaffold for biomineralization: sequesters calcium and forms interconnecting fibrils between otoconia that are incorporated into the calcium crystal structure. Together with OC90, modulates calcite crystal morphology and growth kinetics. This is Otolin-1 from Homo sapiens (Human).